The primary structure comprises 860 residues: Leucine--tRNA ligase (860 aa).

The short motif at 42-52 is the 'HIGH' region element; the sequence is PYPSGRLHMGH. The 'KMSKS' region signature appears at 619–623; sequence KMSKS. Lysine 622 contributes to the ATP binding site.

It belongs to the class-I aminoacyl-tRNA synthetase family.

It is found in the cytoplasm. The catalysed reaction is tRNA(Leu) + L-leucine + ATP = L-leucyl-tRNA(Leu) + AMP + diphosphate. The sequence is that of Leucine--tRNA ligase from Salmonella enteritidis PT4 (strain P125109).